The primary structure comprises 391 residues: Tryptophan synthase beta chain 2 (391 aa).

At K83 the chain carries N6-(pyridoxal phosphate)lysine.

Belongs to the TrpB family. In terms of assembly, tetramer of two alpha and two beta chains. Pyridoxal 5'-phosphate serves as cofactor.

It carries out the reaction (1S,2R)-1-C-(indol-3-yl)glycerol 3-phosphate + L-serine = D-glyceraldehyde 3-phosphate + L-tryptophan + H2O. The protein operates within amino-acid biosynthesis; L-tryptophan biosynthesis; L-tryptophan from chorismate: step 5/5. The beta subunit is responsible for the synthesis of L-tryptophan from indole and L-serine. This chain is Tryptophan synthase beta chain 2 (trpB2), found in Chlamydia caviae (strain ATCC VR-813 / DSM 19441 / 03DC25 / GPIC) (Chlamydophila caviae).